The following is a 771-amino-acid chain: Probable cation-transporting ATPase G (771 aa).

The HMA domain occupies 19 to 86 (GRMRVQATGF…AIIDAETVPA (68 aa)). The chain crosses the membrane as a helical span at residues 72–92 (AAILSAIIDAETVPAAAVPAY). Positions 122 to 143 (DVAAQPSGETSDACCDGEDNED) are disordered. The next 5 membrane-spanning stretches (helical) occupy residues 163-183 (VLLT…VVLG), 209-229 (VGVG…GELG), 330-350 (VFAG…ATAA), 387-407 (MIAA…LVWI), and 411-431 (LVVL…VTVV). The active-site 4-aspartylphosphate intermediate is the Asp462. The Mg(2+) site is built by Asp651 and Asp655. The next 2 membrane-spanning stretches (helical) occupy residues 657-677 (PALA…DVAI) and 716-736 (IITV…AVVL).

The protein belongs to the cation transport ATPase (P-type) (TC 3.A.3) family. Type IB subfamily.

The protein resides in the cell membrane. The enzyme catalyses ATP + H2O = ADP + phosphate + H(+). The chain is Probable cation-transporting ATPase G (ctpG) from Mycobacterium bovis (strain ATCC BAA-935 / AF2122/97).